The chain runs to 199 residues: Urease accessory protein UreG (199 aa).

8 to 15 (GPVGSGKT) contributes to the GTP binding site.

It belongs to the SIMIBI class G3E GTPase family. UreG subfamily. In terms of assembly, homodimer. UreH, UreF and UreG form a complex that acts as a GTP-hydrolysis-dependent molecular chaperone, activating the urease apoprotein by helping to assemble the nickel containing metallocenter of UreC. The UreE protein probably delivers the nickel.

It localises to the cytoplasm. Its function is as follows. Facilitates the functional incorporation of the urease nickel metallocenter. This process requires GTP hydrolysis, probably effectuated by UreG. The protein is Urease accessory protein UreG of Helicobacter pylori (strain P12).